Reading from the N-terminus, the 531-residue chain is DnaJ homolog subfamily C member 21 (531 aa).

The 67-residue stretch at 3–69 (CHYEALGVRR…QERAWYDNHR (67 aa)) folds into the J domain. 3 disordered regions span residues 279 to 311 (FGDG…AELY), 327 to 474 (KAMK…VPAE), and 502 to 531 (KATG…RKNR). Over residues 281 to 311 (DGSDENEMEEHELKDEEDGKDSDEAEDAELY) the composition is skewed to acidic residues. Phosphoserine is present on residues S283 and S302. The segment at 314–338 (LYCPACDKSFKTEKAMKNHEKSKKH) adopts a C2H2-type 1 zinc-finger fold. Residues 364–375 (NPLDDNSEEEME) show a composition bias toward acidic residues. S370 is modified (phosphoserine). Over residues 381–392 (KLSKKQKKKKQK) the composition is skewed to basic residues. A compositionally biased stretch (polar residues) spans 393 to 403 (PAQNYDDNFNV). Residues 442–453 (KPCDDPKSEAKS) are compositionally biased toward basic and acidic residues. The span at 455–464 (PKPKGKKTKD) shows a compositional bias: basic residues. The C2H2-type 2 zinc-finger motif lies at 482–506 (ISCTTCHSEFPSRNKLFDHLKATGH). Residue S511 is modified to Phosphoserine. A compositionally biased stretch (low complexity) spans 511-522 (SSSSLNSATSSQ).

In terms of assembly, interacts with HSPA8, PA2G4 and ZNF622. In terms of tissue distribution, expressed in brain, placenta, kidney and pancreas.

The protein localises to the cytoplasm. It localises to the nucleus. Its subcellular location is the nucleolus. Its function is as follows. May act as a co-chaperone for HSP70. May play a role in ribosomal RNA (rRNA) biogenesis, possibly in the maturation of the 60S subunit. Binds the precursor 45S rRNA. In Homo sapiens (Human), this protein is DnaJ homolog subfamily C member 21 (DNAJC21).